The chain runs to 488 residues: Bifunctional protein HldE (488 aa).

The tract at residues 1–332 (MRESFLDTIQ…QELQSQQSAA (332 aa)) is ribokinase. Position 208–211 (208–211 (NKRE)) interacts with ATP. Residue D277 is part of the active site. The interval 359–488 (FTNGCFDLLH…TSNIIRKLAS (130 aa)) is cytidylyltransferase.

The protein in the N-terminal section; belongs to the carbohydrate kinase PfkB family. In the C-terminal section; belongs to the cytidylyltransferase family. As to quaternary structure, homodimer.

The catalysed reaction is D-glycero-beta-D-manno-heptose 7-phosphate + ATP = D-glycero-beta-D-manno-heptose 1,7-bisphosphate + ADP + H(+). It carries out the reaction D-glycero-beta-D-manno-heptose 1-phosphate + ATP + H(+) = ADP-D-glycero-beta-D-manno-heptose + diphosphate. It functions in the pathway nucleotide-sugar biosynthesis; ADP-L-glycero-beta-D-manno-heptose biosynthesis; ADP-L-glycero-beta-D-manno-heptose from D-glycero-beta-D-manno-heptose 7-phosphate: step 1/4. Its pathway is nucleotide-sugar biosynthesis; ADP-L-glycero-beta-D-manno-heptose biosynthesis; ADP-L-glycero-beta-D-manno-heptose from D-glycero-beta-D-manno-heptose 7-phosphate: step 3/4. Functionally, catalyzes the phosphorylation of D-glycero-D-manno-heptose 7-phosphate at the C-1 position to selectively form D-glycero-beta-D-manno-heptose-1,7-bisphosphate. Its function is as follows. Catalyzes the ADP transfer from ATP to D-glycero-beta-D-manno-heptose 1-phosphate, yielding ADP-D-glycero-beta-D-manno-heptose. In Methylobacillus flagellatus (strain ATCC 51484 / DSM 6875 / VKM B-1610 / KT), this protein is Bifunctional protein HldE.